Consider the following 470-residue polypeptide: Xaa-Pro aminopeptidase 2 (470 aa).

Positions 287, 299, 382, 413, and 437 each coordinate Mn(2+).

The protein belongs to the peptidase M24B family. Homodimer. It depends on Mn(2+) as a cofactor.

The catalysed reaction is Release of any N-terminal amino acid, including proline, that is linked to proline, even from a dipeptide or tripeptide.. This is Xaa-Pro aminopeptidase 2 (pepP2) from Streptomyces coelicolor (strain ATCC BAA-471 / A3(2) / M145).